Reading from the N-terminus, the 338-residue chain is 1-aminocyclopropane-1-carboxylate deaminase (338 aa).

Lys-51 carries the N6-(pyridoxal phosphate)lysine modification. The active-site Nucleophile is Ser-78.

It belongs to the ACC deaminase/D-cysteine desulfhydrase family. In terms of assembly, homotrimer. The cofactor is pyridoxal 5'-phosphate.

It catalyses the reaction 1-aminocyclopropane-1-carboxylate + H2O = 2-oxobutanoate + NH4(+). Functionally, catalyzes a cyclopropane ring-opening reaction, the irreversible conversion of 1-aminocyclopropane-1-carboxylate (ACC) to ammonia and alpha-ketobutyrate. Allows growth on ACC as a nitrogen source. This is 1-aminocyclopropane-1-carboxylate deaminase from Methylibium petroleiphilum (strain ATCC BAA-1232 / LMG 22953 / PM1).